Reading from the N-terminus, the 540-residue chain is NADH-quinone oxidoreductase subunit N (540 aa).

Helical transmembrane passes span L24–L44, L54–T74, P88–A108, A158–F178, L184–L204, Y219–G239, A263–F283, P295–L315, P331–Q351, M357–N377, M385–V405, V428–F448, G462–V482, and M505–P525.

The protein belongs to the complex I subunit 2 family. In terms of assembly, NDH-1 is composed of 14 different subunits. Subunits NuoA, H, J, K, L, M, N constitute the membrane sector of the complex.

The protein resides in the cell membrane. The enzyme catalyses a quinone + NADH + 5 H(+)(in) = a quinol + NAD(+) + 4 H(+)(out). In terms of biological role, NDH-1 shuttles electrons from NADH, via FMN and iron-sulfur (Fe-S) centers, to quinones in the respiratory chain. The immediate electron acceptor for the enzyme in this species is believed to be a menaquinone. Couples the redox reaction to proton translocation (for every two electrons transferred, four hydrogen ions are translocated across the cytoplasmic membrane), and thus conserves the redox energy in a proton gradient. In Rhodococcus opacus (strain B4), this protein is NADH-quinone oxidoreductase subunit N.